The primary structure comprises 161 residues: Allophycocyanin beta chain (161 aa).

Asparagine 71 carries the post-translational modification N4-methylasparagine. Cysteine 81 is a (2R,3E)-phycocyanobilin binding site.

The protein belongs to the phycobiliprotein family. As to quaternary structure, heterodimer of an alpha and a beta chain. In terms of processing, contains one covalently linked phycocyanobilin chromophore.

Its subcellular location is the cellular thylakoid membrane. Functionally, light-harvesting photosynthetic bile pigment-protein from the phycobiliprotein complex. Allophycocyanin has a maximum absorption at approximately 650 nanometers. This Anabaena variabilis protein is Allophycocyanin beta chain (apcB).